We begin with the raw amino-acid sequence, 321 residues long: Small ribosomal subunit biogenesis GTPase RsgA (321 aa).

The region spanning 89–248 is the CP-type G domain; the sequence is QSWINRPPVA…VADTPGFNRP (160 aa). GTP contacts are provided by residues 138 to 141 and 190 to 198; these read TKRD and GPSGVGKTS. The Zn(2+) site is built by C273, C278, H280, and C286.

The protein belongs to the TRAFAC class YlqF/YawG GTPase family. RsgA subfamily. In terms of assembly, monomer. Associates with 30S ribosomal subunit, binds 16S rRNA. Requires Zn(2+) as cofactor.

It localises to the cytoplasm. In terms of biological role, one of several proteins that assist in the late maturation steps of the functional core of the 30S ribosomal subunit. Helps release RbfA from mature subunits. May play a role in the assembly of ribosomal proteins into the subunit. Circularly permuted GTPase that catalyzes slow GTP hydrolysis, GTPase activity is stimulated by the 30S ribosomal subunit. The polypeptide is Small ribosomal subunit biogenesis GTPase RsgA (Prochlorococcus marinus (strain MIT 9313)).